The chain runs to 113 residues: Large ribosomal subunit protein uL24 (113 aa).

This sequence belongs to the universal ribosomal protein uL24 family. As to quaternary structure, part of the 50S ribosomal subunit.

In terms of biological role, one of two assembly initiator proteins, it binds directly to the 5'-end of the 23S rRNA, where it nucleates assembly of the 50S subunit. Functionally, one of the proteins that surrounds the polypeptide exit tunnel on the outside of the subunit. The polypeptide is Large ribosomal subunit protein uL24 (Synechococcus sp. (strain RCC307)).